A 295-amino-acid chain; its full sequence is Tetrahydromethanopterin S-methyltransferase subunit E (295 aa).

The next 7 membrane-spanning stretches (helical) occupy residues 4 to 24, 60 to 80, 87 to 107, 140 to 160, 161 to 181, 234 to 254, and 255 to 275; these read MITGLGVVALMGAAATIAGAA, GEPVAYGTWCGIAGSVAFVLM, VIMAIAIGAVIAAMVHTTYAV, GFIVTFCTVGLSYLMTLPIPG, FAHPFPLPLLAVLWGITIGAI, YGGPLTGFAFGAIVFLSFWNT, and IVFGITGGIISGLIIVLLLII.

It belongs to the MtrE family. The complex is composed of 8 subunits; MtrA, MtrB, MtrC, MtrD, MtrE, MtrF, MtrG and MtrH.

The protein localises to the cell membrane. The catalysed reaction is 5-methyl-5,6,7,8-tetrahydromethanopterin + coenzyme M + 2 Na(+)(in) = 5,6,7,8-tetrahydromethanopterin + methyl-coenzyme M + 2 Na(+)(out). The protein operates within one-carbon metabolism; methanogenesis from CO(2); methyl-coenzyme M from 5,10-methylene-5,6,7,8-tetrahydromethanopterin: step 2/2. Its function is as follows. Part of a complex that catalyzes the formation of methyl-coenzyme M and tetrahydromethanopterin from coenzyme M and methyl-tetrahydromethanopterin. This is an energy-conserving, sodium-ion translocating step. This is Tetrahydromethanopterin S-methyltransferase subunit E from Methanothermobacter marburgensis (strain ATCC BAA-927 / DSM 2133 / JCM 14651 / NBRC 100331 / OCM 82 / Marburg) (Methanobacterium thermoautotrophicum).